The primary structure comprises 132 residues: Small ribosomal subunit protein uS8 (132 aa).

This sequence belongs to the universal ribosomal protein uS8 family. As to quaternary structure, part of the 30S ribosomal subunit. Contacts proteins S5 and S12.

Its function is as follows. One of the primary rRNA binding proteins, it binds directly to 16S rRNA central domain where it helps coordinate assembly of the platform of the 30S subunit. This Rickettsia felis (strain ATCC VR-1525 / URRWXCal2) (Rickettsia azadi) protein is Small ribosomal subunit protein uS8.